We begin with the raw amino-acid sequence, 180 residues long: ATP synthase subunit delta (180 aa).

Belongs to the ATPase delta chain family. F-type ATPases have 2 components, F(1) - the catalytic core - and F(0) - the membrane proton channel. F(1) has five subunits: alpha(3), beta(3), gamma(1), delta(1), epsilon(1). F(0) has three main subunits: a(1), b(2) and c(10-14). The alpha and beta chains form an alternating ring which encloses part of the gamma chain. F(1) is attached to F(0) by a central stalk formed by the gamma and epsilon chains, while a peripheral stalk is formed by the delta and b chains.

The protein resides in the cell membrane. F(1)F(0) ATP synthase produces ATP from ADP in the presence of a proton or sodium gradient. F-type ATPases consist of two structural domains, F(1) containing the extramembraneous catalytic core and F(0) containing the membrane proton channel, linked together by a central stalk and a peripheral stalk. During catalysis, ATP synthesis in the catalytic domain of F(1) is coupled via a rotary mechanism of the central stalk subunits to proton translocation. In terms of biological role, this protein is part of the stalk that links CF(0) to CF(1). It either transmits conformational changes from CF(0) to CF(1) or is implicated in proton conduction. In Enterococcus faecalis (strain ATCC 700802 / V583), this protein is ATP synthase subunit delta.